The primary structure comprises 150 residues: Endoribonuclease YbeY (150 aa).

The Zn(2+) site is built by His-108, His-112, and His-118.

The protein belongs to the endoribonuclease YbeY family. The cofactor is Zn(2+).

Its subcellular location is the cytoplasm. Single strand-specific metallo-endoribonuclease involved in late-stage 70S ribosome quality control and in maturation of the 3' terminus of the 16S rRNA. This Methylococcus capsulatus (strain ATCC 33009 / NCIMB 11132 / Bath) protein is Endoribonuclease YbeY.